A 230-amino-acid chain; its full sequence is Large ribosomal subunit protein uL1 (230 aa).

Belongs to the universal ribosomal protein uL1 family. Part of the 50S ribosomal subunit.

Binds directly to 23S rRNA. The L1 stalk is quite mobile in the ribosome, and is involved in E site tRNA release. Functionally, protein L1 is also a translational repressor protein, it controls the translation of the L11 operon by binding to its mRNA. In Erythrobacter litoralis (strain HTCC2594), this protein is Large ribosomal subunit protein uL1.